A 319-amino-acid polypeptide reads, in one-letter code: GPI-specific phospholipase A2-like PGAP3 (319 aa).

The first 23 residues, 1–23 (MAGRTARLVLLAGAAALASGSQG), serve as a signal peptide directing secretion. Residues 24-101 (DREPVYRDCV…GKWPFSRFLC (78 aa)) lie on the Lumenal side of the membrane. Asn40 is a glycosylation site (N-linked (GlcNAc...) asparagine). A helical transmembrane segment spans residues 102–122 (FQEPASAVASFLNGLASLVML). At 123-135 (CRYRTSVPASSPM) the chain is on the cytoplasmic side. The helical transmembrane segment at 136-156 (YPTCVAFAWVSLNAWFWSTVF) threads the bilayer. At 157 to 169 (HTRDTDLTEKMDY) the chain is on the lumenal side. A helical membrane pass occupies residues 170–190 (FCASTVILHSIYLCCVRTVGL). The Cytoplasmic portion of the chain corresponds to 191–200 (QHPAMASAFR). The helical transmembrane segment at 201–221 (ALLLLLLTAHVSYLSLIHFDY) threads the bilayer. Residues 222–224 (GYN) are Lumenal-facing. Residues 225–245 (MAANVAIGLLNAAWWLAWCLW) form a helical membrane-spanning segment. Residues 246-257 (NQRLPHVHKCVA) lie on the Cytoplasmic side of the membrane. A helical transmembrane segment spans residues 258-278 (VVLLLQGLSLLELLDFPPLFW). Residues 279-281 (VLD) are Lumenal-facing. Residues 282–302 (AHAIWHISTIPVHVLFFSFLE) form a helical membrane-spanning segment. The Cytoplasmic portion of the chain corresponds to 303–319 (DDSLYLLKESEAKVKLD).

It belongs to the PGAP3 family.

The protein localises to the golgi apparatus membrane. Functionally, involved in the fatty acid remodeling steps of GPI-anchor maturation where the unsaturated acyl chain at sn-2 of inositol phosphate is replaced by a saturated stearoyl chain. May catalyze the first step of the fatty acid remodeling, by removing the unsaturated acyl chain at sn-2 of inositol phosphate, generating a lyso-GPI intermediate. The fatty acid remodeling steps is critical for the integration of GPI-APs into lipid rafts. This Bos taurus (Bovine) protein is GPI-specific phospholipase A2-like PGAP3.